A 156-amino-acid chain; its full sequence is Ribonuclease pancreatic (156 aa).

A signal peptide spans 1–28; that stretch reads MALEKSLVLLPLLVLILLVLGWVQPSLG. Residues 33 to 43 are compositionally biased toward basic and acidic residues; that stretch reads AKKFQRQHVDS. The disordered stretch occupies residues 33 to 53; that stretch reads AKKFQRQHVDSDSSPSSSSTY. Positions 35 and 38 each coordinate substrate. The Proton acceptor role is filled by His-40. Cystine bridges form between Cys-54/Cys-112, Cys-68/Cys-123, Cys-86/Cys-138, and Cys-93/Cys-100. Asn-62 is a glycosylation site (N-linked (GlcNAc...) asparagine). Substrate contacts are provided by residues 69 to 73 and Lys-94; that span reads KPVNT. The N-linked (GlcNAc...) asparagine glycan is linked to Asn-104. Arg-113 is a substrate binding site. The N-linked (GlcNAc...) asparagine glycan is linked to Asn-116. The active-site Proton donor is His-147.

This sequence belongs to the pancreatic ribonuclease family. As to quaternary structure, monomer. Interacts with and forms tight 1:1 complexes with RNH1. Dimerization of two such complexes may occur. Interaction with RNH1 inhibits this protein. In terms of tissue distribution, pancreas and other tissues and body fluids (indicating it may have other physiological functions besides its role in digestion).

The protein resides in the secreted. The enzyme catalyses an [RNA] containing cytidine + H2O = an [RNA]-3'-cytidine-3'-phosphate + a 5'-hydroxy-ribonucleotide-3'-[RNA].. The catalysed reaction is an [RNA] containing uridine + H2O = an [RNA]-3'-uridine-3'-phosphate + a 5'-hydroxy-ribonucleotide-3'-[RNA].. Functionally, endonuclease that catalyzes the cleavage of RNA on the 3' side of pyrimidine nucleotides. Acts on single-stranded and double-stranded RNA. The protein is Ribonuclease pancreatic (RNASE1) of Pan troglodytes (Chimpanzee).